We begin with the raw amino-acid sequence, 287 residues long: Formamidopyrimidine-DNA glycosylase (287 aa).

Pro2 functions as the Schiff-base intermediate with DNA in the catalytic mechanism. Glu3 serves as the catalytic Proton donor. Lys61 (proton donor; for beta-elimination activity) is an active-site residue. His95, Arg115, and Arg157 together coordinate DNA. The segment at 243–277 (NVYGRADQPCRRCGTPVRREAFMNRSSYSCPRCQP) adopts an FPG-type zinc-finger fold. The active-site Proton donor; for delta-elimination activity is Arg267.

It belongs to the FPG family. In terms of assembly, monomer. Zn(2+) serves as cofactor.

The catalysed reaction is Hydrolysis of DNA containing ring-opened 7-methylguanine residues, releasing 2,6-diamino-4-hydroxy-5-(N-methyl)formamidopyrimidine.. The enzyme catalyses 2'-deoxyribonucleotide-(2'-deoxyribose 5'-phosphate)-2'-deoxyribonucleotide-DNA = a 3'-end 2'-deoxyribonucleotide-(2,3-dehydro-2,3-deoxyribose 5'-phosphate)-DNA + a 5'-end 5'-phospho-2'-deoxyribonucleoside-DNA + H(+). Functionally, involved in base excision repair of DNA damaged by oxidation or by mutagenic agents. Acts as a DNA glycosylase that recognizes and removes damaged bases. Has a preference for oxidized purines, such as 7,8-dihydro-8-oxoguanine (8-oxoG). Has AP (apurinic/apyrimidinic) lyase activity and introduces nicks in the DNA strand. Cleaves the DNA backbone by beta-delta elimination to generate a single-strand break at the site of the removed base with both 3'- and 5'-phosphates. This chain is Formamidopyrimidine-DNA glycosylase, found in Salinispora arenicola (strain CNS-205).